The sequence spans 141 residues: Large ribosomal subunit protein bL17 (141 aa).

A disordered region spans residues 120–141 (TSAKGQDSGPVLTADEDEFEAA).

This sequence belongs to the bacterial ribosomal protein bL17 family. In terms of assembly, part of the 50S ribosomal subunit. Contacts protein L32.

This chain is Large ribosomal subunit protein bL17, found in Novosphingobium aromaticivorans (strain ATCC 700278 / DSM 12444 / CCUG 56034 / CIP 105152 / NBRC 16084 / F199).